The primary structure comprises 126 residues: Desulfoferrodoxin (126 aa).

9 residues coordinate Fe cation: cysteine 10, cysteine 13, cysteine 29, cysteine 30, histidine 49, histidine 69, histidine 75, cysteine 116, and histidine 119.

Belongs to the desulfoferrodoxin family. In terms of assembly, homodimer. Fe(3+) is required as a cofactor. Requires Cu(2+) as cofactor.

It carries out the reaction reduced [rubredoxin] + superoxide + 2 H(+) = oxidized [rubredoxin] + H2O2. Catalyzes the one-electron reduction of superoxide anion radical to hydrogen peroxide at a nonheme ferrous iron center. Plays a fundamental role in case of oxidative stress via its superoxide detoxification activity. This Desulfarculus baarsii (strain ATCC 33931 / DSM 2075 / LMG 7858 / VKM B-1802 / 2st14) protein is Desulfoferrodoxin (dfx).